The sequence spans 619 residues: MGTGKKEKSRIQRQGKVTGDPKVKGENFYRSAKKIKALNVLKEGKAIRNKEGKVVKAASYQSRDVPTAVIEPNRRWFNNTRVISQDTLTSFREAIAEKDKDPYSVLLKSNKLPMSLIRDGPKDALKKHQAKMTIESEPFSQTFGPKAQRKRPKLSFNTIGDLTEHSEKSMDTYQARLEEIKLLSGASGYGGGLADDDVQEEDFSVATAKEAIFTKGQSKRIWNELYKVIDSSDVILHVIDARDPLGTRCRHVEKYLATEAPHKHLIFVLNKIDLVPSKTAAAWIRVLQKDHPTCAMRSSIKNPFGRGSLIDLLRQFSILHKDRKQISVGLVGYPNVGKSSIINALRGKPVAKVAPIPGETKVWQYVTLMRRIYLIDCPGIVPPNQNDTPQDLLLRGVVRVENVDNPEQYIPAVLNKVKPHHMERTYELKGWKDHIHFLEMLARKGGRLLKGGEPDVDGVAKMVLNDFMRGKIPWFTPAPEKEEGETDTMEGREGRYGEMSKKRKRDEDDSAPATTPASAGEDAKEEDPENFAGFDSDSDSEVEEAAEEKGEEKSTAEDMIPLDASSDEEEDGEEEGSDVEDDEEGSDLDIEGASELEESESEAEAAPAPPPKKQRRSRK.

Over residues Met1–Arg10 the composition is skewed to basic and acidic residues. The interval Met1–Lys24 is disordered. Residues Trp222–Pro383 enclose the CP-type G domain. GTP contacts are provided by residues Gly332 to Ser339 and Asp376 to Ile380. Residues Pro473–Lys619 form a disordered region. The segment covering Met489–Ser500 has biased composition (basic and acidic residues). Residues Ser536–Ala546 are compositionally biased toward acidic residues. Over residues Glu547 to Ala556 the composition is skewed to basic and acidic residues. Positions Ser565 to Ala603 are enriched in acidic residues.

It belongs to the TRAFAC class YlqF/YawG GTPase family. NOG2 subfamily.

Its subcellular location is the nucleus. The protein resides in the nucleolus. In terms of biological role, GTPase that associates with pre-60S ribosomal subunits in the nucleolus and is required for their nuclear export and maturation. In Neurospora crassa (strain ATCC 24698 / 74-OR23-1A / CBS 708.71 / DSM 1257 / FGSC 987), this protein is Nucleolar GTP-binding protein 2 (nog-2).